The sequence spans 379 residues: tRNA (guanine(26)-N(2))-dimethyltransferase (379 aa).

Positions 1-26 (MECREITEGSTTFTAPVQDETTQFPP) are disordered. The Trm1 methyltransferase domain occupies 4–369 (REITEGSTTF…APLPLIEEKI (366 aa)). The segment covering 8–25 (EGSTTFTAPVQDETTQFP) has biased composition (polar residues). S-adenosyl-L-methionine is bound by residues arginine 41, arginine 66, aspartate 82, aspartate 108, and alanine 109. The Zn(2+) site is built by cysteine 237, cysteine 240, cysteine 257, and cysteine 260.

It belongs to the class I-like SAM-binding methyltransferase superfamily. Trm1 family.

The enzyme catalyses guanosine(26) in tRNA + 2 S-adenosyl-L-methionine = N(2)-dimethylguanosine(26) in tRNA + 2 S-adenosyl-L-homocysteine + 2 H(+). In terms of biological role, dimethylates a single guanine residue at position 26 of a number of tRNAs using S-adenosyl-L-methionine as donor of the methyl groups. This chain is tRNA (guanine(26)-N(2))-dimethyltransferase, found in Methanocorpusculum labreanum (strain ATCC 43576 / DSM 4855 / Z).